Here is a 587-residue protein sequence, read N- to C-terminus: 65-kDa microtubule-associated protein 1 (587 aa).

Coiled coils occupy residues 46-84, 151-181, 234-257, 290-317, and 461-489; these read QECL…TMSL, DESD…LRKV, LTLK…LIDL, ALAR…MKEI, and AMLD…VQEQ. A compositionally biased stretch (basic and acidic residues) spans 474–494; sequence EEEKRRLREQKKVQEQPHVEQ. The interval 474-587 is disordered; it reads EEEKRRLREQ…AADHQVPASP (114 aa). A Phosphoserine modification is found at S503. T526 is subject to Phosphothreonine. Positions 531 to 542 are enriched in polar residues; it reads LSLNANQNGSRS. Phosphoserine occurs at positions 532 and 540. T543 and T552 each carry phosphothreonine. The segment covering 543–553 has biased composition (basic and acidic residues); it reads TAKEAGRRETL. 3 positions are modified to phosphoserine: S573, S576, and S586.

It belongs to the MAP65/ASE1 family. Forms dimer. Binds to MT, mostly with coaligned MT, both between parallel or antiparallel, forming thick bundles. Interacts with the alpha-tubulin subunit of the tubulin heterodimer. Bundles polymerized MT via the formation of 25-nm crossbridges at specific stages of the cell cycle (e.g. bundles microtubules in interphase, anaphase and telophase but does not bind microtubules in prophase or metaphase), at the plus-end, the minus-end, or along the entire length of MT, and along phragmoplast MT. Interacts with SH3P1 and MPK4. Post-translationally, basal phosphorylation at all stages of the cell cycle. MT-binding properties inhibited by hyperphosphorylation mediated by CDKs and/or MAPKs (e.g. ANP2, ANP3, MPK4 and MPK6) during prometaphase and metaphase. In terms of tissue distribution, expressed in all organs and tissues with the exception of sepals and anthers. Bound to subsets of microtubules in the cells of root epidermis, hypocotyl and cotyledons (at protein level).

The protein resides in the nucleus. It is found in the cytoplasm. Its subcellular location is the cytoskeleton. It localises to the spindle. The protein localises to the phragmoplast. The protein resides in the cell cortex. In terms of biological role, microtubule-associated protein that bundle and stabilize adjacent microtubules (MT) of the cell cortex. Enhances MT nucleation. Can also bind to tubulin dimers and promotes their polymerization. Confers MT resistance to the drug propyzamide and cold conditions. Plays a role in the central spindle at anaphase to early cytokinesis but is not essential at the midline of the phragmoplast at later stages. Represses metaphase spindle organization and the transition to anaphase in dephosphorylated active form. Promotes the formation of a planar network of antiparallel microtubules. May be involved in stomatal movement modulation by regulating the dynamic and arrangement of cortical MT. The chain is 65-kDa microtubule-associated protein 1 (MAP65-1) from Arabidopsis thaliana (Mouse-ear cress).